Here is a 121-residue protein sequence, read N- to C-terminus: Ribosome-binding factor A (121 aa).

It belongs to the RbfA family. In terms of assembly, monomer. Binds 30S ribosomal subunits, but not 50S ribosomal subunits or 70S ribosomes.

It is found in the cytoplasm. One of several proteins that assist in the late maturation steps of the functional core of the 30S ribosomal subunit. Associates with free 30S ribosomal subunits (but not with 30S subunits that are part of 70S ribosomes or polysomes). Required for efficient processing of 16S rRNA. May interact with the 5'-terminal helix region of 16S rRNA. This chain is Ribosome-binding factor A, found in Clostridium novyi (strain NT).